A 247-amino-acid polypeptide reads, in one-letter code: Adenosylcobinamide-GDP ribazoletransferase (247 aa).

Helical transmembrane passes span 34–54 (IITF…VFMA), 59–79 (FGVP…TGGF), 113–133 (GGLA…ELAL), 138–158 (ILAS…LLMY), and 194–214 (VLLP…AIFI).

It belongs to the CobS family. Mg(2+) serves as cofactor.

The protein resides in the cell inner membrane. The catalysed reaction is alpha-ribazole + adenosylcob(III)inamide-GDP = adenosylcob(III)alamin + GMP + H(+). The enzyme catalyses alpha-ribazole 5'-phosphate + adenosylcob(III)inamide-GDP = adenosylcob(III)alamin 5'-phosphate + GMP + H(+). Its pathway is cofactor biosynthesis; adenosylcobalamin biosynthesis; adenosylcobalamin from cob(II)yrinate a,c-diamide: step 7/7. Its function is as follows. Joins adenosylcobinamide-GDP and alpha-ribazole to generate adenosylcobalamin (Ado-cobalamin). Also synthesizes adenosylcobalamin 5'-phosphate from adenosylcobinamide-GDP and alpha-ribazole 5'-phosphate. In Escherichia coli O17:K52:H18 (strain UMN026 / ExPEC), this protein is Adenosylcobinamide-GDP ribazoletransferase.